A 238-amino-acid polypeptide reads, in one-letter code: NADH-quinone oxidoreductase subunit C (238 aa).

The tract at residues 1–20 (MSSPDQNPSDAAGQTGSSNE) is disordered.

The protein belongs to the complex I 30 kDa subunit family. NDH-1 is composed of 14 different subunits. Subunits NuoB, C, D, E, F, and G constitute the peripheral sector of the complex.

The protein localises to the cell membrane. It carries out the reaction a quinone + NADH + 5 H(+)(in) = a quinol + NAD(+) + 4 H(+)(out). Functionally, NDH-1 shuttles electrons from NADH, via FMN and iron-sulfur (Fe-S) centers, to quinones in the respiratory chain. The immediate electron acceptor for the enzyme in this species is believed to be a menaquinone. Couples the redox reaction to proton translocation (for every two electrons transferred, four hydrogen ions are translocated across the cytoplasmic membrane), and thus conserves the redox energy in a proton gradient. This is NADH-quinone oxidoreductase subunit C from Mycobacterium marinum (strain ATCC BAA-535 / M).